Here is a 363-residue protein sequence, read N- to C-terminus: Peptide chain release factor 1 (363 aa).

N5-methylglutamine is present on Gln-237.

It belongs to the prokaryotic/mitochondrial release factor family. Post-translationally, methylated by PrmC. Methylation increases the termination efficiency of RF1.

It localises to the cytoplasm. Functionally, peptide chain release factor 1 directs the termination of translation in response to the peptide chain termination codons UAG and UAA. The protein is Peptide chain release factor 1 of Hydrogenovibrio crunogenus (strain DSM 25203 / XCL-2) (Thiomicrospira crunogena).